A 443-amino-acid polypeptide reads, in one-letter code: EP1-like glycoprotein 4 (443 aa).

A signal peptide spans 1–22 (MEFSTTLALFFTLSIFLVGAQA). A Bulb-type lectin domain is found at 29-159 (QFRVVNEGGY…NGKFVWQSFD (131 aa)). N-linked (GlcNAc...) asparagine glycans are attached at residues Asn66, Asn102, Asn258, and Asn269. A WD repeat occupies 254-296 (GSQFNVSTFLSRPKHNATLSFLRLESDGNIRVWSYSTLATSTA). In terms of domain architecture, PAN spans 356-433 (CDPKTFHYFK…TSLVAYVKAP (78 aa)). Cystine bridges form between Cys387-Cys409 and Cys391-Cys397. The N-linked (GlcNAc...) asparagine glycan is linked to Asn434.

Its subcellular location is the secreted. The protein localises to the cell wall. The sequence is that of EP1-like glycoprotein 4 from Arabidopsis thaliana (Mouse-ear cress).